Reading from the N-terminus, the 350-residue chain is DNA polymerase IV (350 aa).

In terms of domain architecture, UmuC spans 7–188 (IIHIDMDYFF…LPVKKLFGVG (182 aa)). Mg(2+) contacts are provided by aspartate 11 and aspartate 106. Residue glutamate 107 is part of the active site.

Belongs to the DNA polymerase type-Y family. In terms of assembly, monomer. It depends on Mg(2+) as a cofactor.

It is found in the cytoplasm. The catalysed reaction is DNA(n) + a 2'-deoxyribonucleoside 5'-triphosphate = DNA(n+1) + diphosphate. In terms of biological role, poorly processive, error-prone DNA polymerase involved in untargeted mutagenesis. Copies undamaged DNA at stalled replication forks, which arise in vivo from mismatched or misaligned primer ends. These misaligned primers can be extended by PolIV. Exhibits no 3'-5' exonuclease (proofreading) activity. May be involved in translesional synthesis, in conjunction with the beta clamp from PolIII. The chain is DNA polymerase IV from Francisella philomiragia subsp. philomiragia (strain ATCC 25017 / CCUG 19701 / FSC 153 / O#319-036).